The chain runs to 137 residues: Large ribosomal subunit protein uL16 (137 aa).

The protein belongs to the universal ribosomal protein uL16 family. As to quaternary structure, part of the 50S ribosomal subunit.

In terms of biological role, binds 23S rRNA and is also seen to make contacts with the A and possibly P site tRNAs. The protein is Large ribosomal subunit protein uL16 of Rhizobium meliloti (strain 1021) (Ensifer meliloti).